Reading from the N-terminus, the 429-residue chain is L-cysteine:1D-myo-inositol 2-amino-2-deoxy-alpha-D-glucopyranoside ligase (429 aa).

C60 is a binding site for Zn(2+). Residues C60–T63, T75, and N98–T100 each bind L-cysteinyl-5'-AMP. Positions I62 to H72 match the 'HIGH' region motif. Positions E204 to P209 match the 'ERGGDP' region motif. W244 contributes to the L-cysteinyl-5'-AMP binding site. C248 is a Zn(2+) binding site. L-cysteinyl-5'-AMP is bound at residue G266 to D268. Residue H273 coordinates Zn(2+). I300 is an L-cysteinyl-5'-AMP binding site. The short motif at K306 to S310 is the 'KMSKS' region element.

The protein belongs to the class-I aminoacyl-tRNA synthetase family. MshC subfamily. Monomer. The cofactor is Zn(2+).

The catalysed reaction is 1D-myo-inositol 2-amino-2-deoxy-alpha-D-glucopyranoside + L-cysteine + ATP = 1D-myo-inositol 2-(L-cysteinylamino)-2-deoxy-alpha-D-glucopyranoside + AMP + diphosphate + H(+). Catalyzes the ATP-dependent condensation of GlcN-Ins and L-cysteine to form L-Cys-GlcN-Ins. In Mycolicibacterium vanbaalenii (strain DSM 7251 / JCM 13017 / BCRC 16820 / KCTC 9966 / NRRL B-24157 / PYR-1) (Mycobacterium vanbaalenii), this protein is L-cysteine:1D-myo-inositol 2-amino-2-deoxy-alpha-D-glucopyranoside ligase.